A 523-amino-acid polypeptide reads, in one-letter code: 2-isopropylmalate synthase (523 aa).

The region spanning V5–H267 is the Pyruvate carboxyltransferase domain. Mn(2+)-binding residues include D14, H202, H204, and N238. The segment at K392–V523 is regulatory domain.

The protein belongs to the alpha-IPM synthase/homocitrate synthase family. LeuA type 1 subfamily. Homodimer. Mn(2+) is required as a cofactor.

It localises to the cytoplasm. The enzyme catalyses 3-methyl-2-oxobutanoate + acetyl-CoA + H2O = (2S)-2-isopropylmalate + CoA + H(+). Its pathway is amino-acid biosynthesis; L-leucine biosynthesis; L-leucine from 3-methyl-2-oxobutanoate: step 1/4. Functionally, catalyzes the condensation of the acetyl group of acetyl-CoA with 3-methyl-2-oxobutanoate (2-ketoisovalerate) to form 3-carboxy-3-hydroxy-4-methylpentanoate (2-isopropylmalate). This is 2-isopropylmalate synthase from Shewanella sediminis (strain HAW-EB3).